A 356-amino-acid polypeptide reads, in one-letter code: Alpha-N-acetylneuraminide alpha-2,8-sialyltransferase (356 aa).

Residues 1–29 (MSPCGRARRQTSRGAMAVLAWKFPRTRLP) lie on the Cytoplasmic side of the membrane. Residues 30–48 (MGASALCVVVLCWLYIFPV) form a helical; Signal-anchor for type II membrane protein membrane-spanning segment. The Lumenal portion of the chain corresponds to 49-356 (YRLPNEKEIV…CEDTSLQPTS (308 aa)). Asn71 and Asn119 each carry an N-linked (GlcNAc...) asparagine glycan. 2 cysteine pairs are disulfide-bonded: Cys138–Cys287 and Cys152–Cys347. Positions 143 and 166 each coordinate CMP-N-acetyl-beta-neuraminate. Residues Asn214 and Asn245 are each glycosylated (N-linked (GlcNAc...) asparagine). CMP-N-acetyl-beta-neuraminate-binding residues include Ser274, Thr275, Gly276, Trp296, and His310. Catalysis depends on His322, which acts as the Proton donor/acceptor.

It belongs to the glycosyltransferase 29 family. Strongly expressed in melanoma cell lines, adult and fetal brain and to a lesser extent in adult and fetal lung.

It is found in the golgi apparatus membrane. The catalysed reaction is an N-acetyl-alpha-neuraminyl-(2-&gt;3)-beta-D-galactosyl derivative + CMP-N-acetyl-beta-neuraminate = an N-acetyl-alpha-neuraminyl-(2-&gt;8)-N-acetyl-alpha-neuraminyl-(2-&gt;3)-beta-D-galactosyl derivative + CMP + H(+). The enzyme catalyses a ganglioside GM3 (d18:1(4E)) + CMP-N-acetyl-beta-neuraminate = a ganglioside GD3 (d18:1(4E)) + CMP + H(+). It catalyses the reaction a ganglioside GD3 (d18:1(4E)) + CMP-N-acetyl-beta-neuraminate = a ganglioside GT3 (d18:1(4E)) + CMP + H(+). It carries out the reaction a ganglioside GD1a (d18:1(4E)) + CMP-N-acetyl-beta-neuraminate = a ganglioside GT1a (d18:1(4E)) + CMP + H(+). The catalysed reaction is a ganglioside GT1b (d18:1(4E)) + CMP-N-acetyl-beta-neuraminate = a ganglioside GQ1b (d18:1(4E)) + CMP + H(+). The enzyme catalyses a ganglioside GM1b (d18:1(4E)) + CMP-N-acetyl-beta-neuraminate = a ganglioside GD1c (d18:1(4E)) + CMP + H(+). It catalyses the reaction a ganglioside GD3 + CMP-N-acetyl-beta-neuraminate = a ganglioside GT3 + CMP + H(+). It carries out the reaction [alpha-N-acetylneuraminyl-(2-&gt;8)](n)-alpha-N-acetylneuraminyl-(2-&gt;8)-alpha-N-acetylneuraminyl-(2-&gt;3)-beta-D-galactosyl-(1-&gt;4)-beta-D-glucosyl-(1&lt;-&gt;1)-ceramide + CMP-N-acetyl-beta-neuraminate = [alpha-N-acetylneuraminyl-(2-&gt;8)](n+1)-alpha-N-acetylneuraminyl-(2-&gt;8)-alpha-N-acetylneuraminyl-(2-&gt;3)-beta-D-galactosyl-(1-&gt;4)-beta-D-glucosyl-(1&lt;-&gt;1)-ceramide + CMP + H(+). It functions in the pathway protein modification; protein glycosylation. The protein operates within lipid metabolism; sphingolipid metabolism. Its function is as follows. Catalyzes the addition of sialic acid in alpha 2,8-linkage to the sialic acid moiety of the ganglioside GM3 to form ganglioside GD3; gangliosides are a subfamily of complex glycosphingolipds that contain one or more residues of sialic acid. Can catalyze the addition of a second alpha-2,8-sialic acid to GD3 to form GT3. Can use GM1b, GD1a and GT1b as acceptor substrates to synthesize GD1c, GT1a and GQ1b respectively. Can synthesize unusual tetra- and pentasialylated lactosylceramide derivatives identified as GQ3 (II3Neu5Ac4-Gg2Cer) and GP3 (II3Neu5Ac5-Gg2Cer) in breast cancer cells. This chain is Alpha-N-acetylneuraminide alpha-2,8-sialyltransferase, found in Homo sapiens (Human).